The sequence spans 360 residues: MLVYLAEYLTRFHTGFNVFSYVTFRAILGLLTALMFSLWWGPKLIERLQLMQIGQVVRNDGPESHFSKRGTPTMGGLMILGAIFISVLLWGDLGSRYVWVMLFVLGSFGMIGFIDDYRKVVRKDTKGLIARWKYILQSLAALIIAFFLYTTASNPGETQLVVPFFKDVMPQLGAVFIVLAYFTIVGSSNAVNLTDGLDGLAIMPTVMVAAAFALIAYLSGHAQFANYLHIPHLPGSGELVIVCTAIVGAGLGFLWFNTYPAQVFMGDVGSLSLGAALGAIAVLVRQEILLVIMGGVFVMETVSVILQVGSYKLRGQRIFRMAPIHHHYELKGWPEPRVIVRFWIISIFLVLLGLATLKLR.

A run of 10 helical transmembrane segments spans residues Ala26–Glu46, Met74–Gly94, Tyr97–Tyr117, Trp132–Ala152, Val168–Ser188, Gly199–Ser219, Ser236–Phe256, Val263–Leu283, Ile288–Val308, and Val338–Lys358.

Belongs to the glycosyltransferase 4 family. MraY subfamily. Mg(2+) is required as a cofactor.

It localises to the cell inner membrane. It catalyses the reaction UDP-N-acetyl-alpha-D-muramoyl-L-alanyl-gamma-D-glutamyl-meso-2,6-diaminopimeloyl-D-alanyl-D-alanine + di-trans,octa-cis-undecaprenyl phosphate = di-trans,octa-cis-undecaprenyl diphospho-N-acetyl-alpha-D-muramoyl-L-alanyl-D-glutamyl-meso-2,6-diaminopimeloyl-D-alanyl-D-alanine + UMP. The protein operates within cell wall biogenesis; peptidoglycan biosynthesis. Its function is as follows. Catalyzes the initial step of the lipid cycle reactions in the biosynthesis of the cell wall peptidoglycan: transfers peptidoglycan precursor phospho-MurNAc-pentapeptide from UDP-MurNAc-pentapeptide onto the lipid carrier undecaprenyl phosphate, yielding undecaprenyl-pyrophosphoryl-MurNAc-pentapeptide, known as lipid I. The polypeptide is Phospho-N-acetylmuramoyl-pentapeptide-transferase (Shewanella sp. (strain ANA-3)).